A 380-amino-acid chain; its full sequence is MKPATLEFLRQRFFAYYNGAIPGAGAGYSPESLTEREWGFLFFTENQRSGMRRHISFTSQDELTSYLKSMVPAHVYYSTAYYTHPGAAQMADKEWRGADVIFDLDADHIVRGPYDIMLARVKEELFKLIDMLTGELGFAKRDLRINFSGGRGYHVHLPLLSVRGWDTAERRELVNYVSGTGLSFDSMMAPSQKSGWKLRYHDALNDELARIAGLPCEDALSYLSGLSGISETFAAGFLKNISQTQNLLKSNPEKLLANKVVRAIANAENEPFQAGILSRAAQADEPVTTDVKRLIRHPGSLHGGSGMRVVPISVDQLDAFDPLIDAVVFGERNVSVDCAFNLSMPILGNNYTLTAGRNVVPEALGVFLCCRGIAELSGGI.

Residues Asp103, Asp105, and Asp284 contribute to the active site.

Belongs to the eukaryotic-type primase small subunit family. As to quaternary structure, heterodimer of a small subunit (PriS) and a large subunit (PriL). Requires Mg(2+) as cofactor. The cofactor is Mn(2+).

In terms of biological role, catalytic subunit of DNA primase, an RNA polymerase that catalyzes the synthesis of short RNA molecules used as primers for DNA polymerase during DNA replication. The small subunit contains the primase catalytic core and has DNA synthesis activity on its own. Binding to the large subunit stabilizes and modulates the activity, increasing the rate of DNA synthesis while decreasing the length of the DNA fragments, and conferring RNA synthesis capability. The DNA polymerase activity may enable DNA primase to also catalyze primer extension after primer synthesis. May also play a role in DNA repair. This chain is DNA primase small subunit PriS, found in Methanocorpusculum labreanum (strain ATCC 43576 / DSM 4855 / Z).